Consider the following 202-residue polypeptide: uncharacterized protein (202 aa).

This is an uncharacterized protein from Dictyostelium discoideum (Social amoeba).